We begin with the raw amino-acid sequence, 399 residues long: Nicotinate phosphoribosyltransferase (399 aa).

At His217 the chain carries Phosphohistidine; by autocatalysis.

It belongs to the NAPRTase family. Transiently phosphorylated on a His residue during the reaction cycle. Phosphorylation strongly increases the affinity for substrates and increases the rate of nicotinate D-ribonucleotide production. Dephosphorylation regenerates the low-affinity form of the enzyme, leading to product release.

The enzyme catalyses nicotinate + 5-phospho-alpha-D-ribose 1-diphosphate + ATP + H2O = nicotinate beta-D-ribonucleotide + ADP + phosphate + diphosphate. It functions in the pathway cofactor biosynthesis; NAD(+) biosynthesis; nicotinate D-ribonucleotide from nicotinate: step 1/1. In terms of biological role, catalyzes the synthesis of beta-nicotinate D-ribonucleotide from nicotinate and 5-phospho-D-ribose 1-phosphate at the expense of ATP. The protein is Nicotinate phosphoribosyltransferase of Burkholderia cenocepacia (strain HI2424).